A 318-amino-acid polypeptide reads, in one-letter code: Phospholipid scramblase 1 (318 aa).

Positions 1 to 14 (MDKQNSQMNASHPE) are enriched in polar residues. The interval 1-64 (MDKQNSQMNA…GPGPAGFPVP (64 aa)) is disordered. The segment at 1-84 (MDKQNSQMNA…NQPVGAAGVP (84 aa)) is proline-rich domain (PRD). Over 1–288 (MDKQNSQMNA…IQFPLDLDVK (288 aa)) the chain is Cytoplasmic. The SH3-binding 1 signature appears at 18-26 (PVGYPPQYP). 2 consecutive short sequence motifs (PPXY motif) follow at residues 22–25 (PPQY) and 33–36 (PPGY). A compositionally biased stretch (low complexity) spans 31–44 (QGPPGYSGYPGPQV). The SH3-binding 2 motif lies at 42–50 (PQVSYPPPP). Phosphotyrosine; by ABL is present on residues Y69 and Y74. An SH3-binding 3 motif is present at residues 84 to 92 (PWMPAPQPP). Positions 99 to 290 (LEYLSQIDQI…FPLDLDVKMK (192 aa)) are interaction with hepatitis C virus E2 glycoprotein. T161 is subject to Phosphothreonine; by PKC/PRKCD. Residues C184, C185, C186, C188, and C189 are each lipidated (S-palmitoyl cysteine). A Nuclear localization signal motif is present at residues 257 to 266 (GKISKHWTGI). A helical transmembrane segment spans residues 289-305 (MKAVMIGACFLIDFMFF). Residues 306–318 (ESTGSQEQKSGVW) lie on the Extracellular side of the membrane.

The protein belongs to the phospholipid scramblase family. As to quaternary structure, forms homooligomers in the presence of calcium. Interacts with ABL. Interacts with RELT, RELL1 and RELL2. Interacts with OXSR1 in the presence of RELT. Interacts with TOP2A and TOP2B. Interacts with OCLN. Interacts with TRPC5. Interacts with TRPC1 and TRPC4. Interacts with ILDR1. In terms of assembly, (Microbial infection) Interacts with hepatitis C virus E1 and E2 glycoproteins. (Microbial infection) Interacts with T-cell leukemia virus (HTLV)-1 protein Tax (via N-terminus); this interaction represses Tax homodimerization. As to quaternary structure, (Microbial infection) Interacts with HIV-1 protein Tat; this interaction represses the Tat-dependent transactivation of the HIV-1 long terminal repeat (LTR) and reduces the nuclear translocation of Tat. In terms of assembly, (Microbial infection) Interacts with hepatitis B virus protein HBx; this interaction promotes the proteasomal degradation of HBx. (Microbial infection) Interacts with human cytomegalovirus proteins IE1 and IE2. As to quaternary structure, (Microbial infection) Interacts with Epstein Barr virus (EBV) lytic switch protein BZLF1; this interaction negatively regulates the transcriptional regulatory activity of BZLF1 by preventing the formation of the BZLF1-CBP complex. In terms of assembly, (Microbial infection) Interacts with influenza virus nucleoprotein NP. Ca(2+) serves as cofactor. The cofactor is Mg(2+). It depends on Zn(2+) as a cofactor. Phosphorylation at Thr-161 by PKC/PKCD increases its phospholipid scramblase activity during both cell stimulation and apoptosis. Phosphorylated by OXSR1 in the presence of RELT. Post-translationally, palmitoylation is required for its phospholipid scramblase activity. Palmitoylation regulates its localization to the cell membrane or the nucleus; trafficking to the cell membrane is dependent upon palmitoylation whereas in the absence of palmitoylation, localizes to the nucleus. As to expression, expressed in platelets, erythrocyte membranes, lymphocytes, spleen, thymus, prostate, testis, uterus, intestine, colon, heart, placenta, lung, liver, kidney and pancreas. Not detected in brain and skeletal muscle.

Its subcellular location is the cell membrane. The protein localises to the nucleus. It localises to the cytoplasm. It is found in the perinuclear region. It carries out the reaction a 1,2-diacyl-sn-glycero-3-phosphocholine(in) = a 1,2-diacyl-sn-glycero-3-phosphocholine(out). The catalysed reaction is a 1,2-diacyl-sn-glycero-3-phosphoethanolamine(in) = a 1,2-diacyl-sn-glycero-3-phosphoethanolamine(out). It catalyses the reaction a 1,2-diacyl-sn-glycero-3-phospho-L-serine(in) = a 1,2-diacyl-sn-glycero-3-phospho-L-serine(out). With respect to regulation, activated by Pb(2+) and Hg(2+) ions. Phosphorylation at Thr-161 by PKC/PKCD increases its phospholipid scramblase activity during both cell stimulation and apoptosis. Catalyzes calcium-induced ATP-independent rapid bidirectional and non-specific movement of phospholipids (lipid scrambling or lipid flip-flop) between the inner and outer leaflet of the plasma membrane resulting in collapse of the phospholipid asymmetry which leads to phosphatidylserine externalization on the cell surface. Mediates calcium-dependent phosphatidylserine externalization and apoptosis in neurons via its association with TRPC5. Also exhibits magnesium-dependent nuclease activity against double-stranded DNA and RNA but not single-stranded DNA and can enhance DNA decatenation mediated by TOP2A. Negatively regulates FcR-mediated phagocytosis in differentiated macrophages. May contribute to cytokine-regulated cell proliferation and differentiation. May play a role in the antiviral response of interferon (IFN) by amplifying and enhancing the IFN response through increased expression of select subset of potent antiviral genes. Inhibits the functions of viral transactivators, including human T-cell leukemia virus (HTLV)-1 protein Tax, human immunodeficiency virus (HIV)-1 Tat, human hepatitis B virus (HBV) HBx, Epstein-Barr virus (EBV) BZLF1 and human cytomegalovirus IE1 and IE2 proteins through direct interactions. Also mediates the inhibition of influenza virus infection by preventing nuclear import of the viral nucleoprotein/NP. Plays a crucial role as a defense factor against SARS-CoV-2 independently of its scramblase activity by directly targeting nascent viral vesicles to prevent virus-membrane fusion and the release of viral RNA into the host-cell cytosol. Its function is as follows. (Microbial infection) Acts as an attachment receptor for HCV. The protein is Phospholipid scramblase 1 (PLSCR1) of Homo sapiens (Human).